Here is a 111-residue protein sequence, read N- to C-terminus: Phosphoribosyl-ATP pyrophosphatase (111 aa).

This sequence belongs to the PRA-PH family.

It is found in the cytoplasm. It carries out the reaction 1-(5-phospho-beta-D-ribosyl)-ATP + H2O = 1-(5-phospho-beta-D-ribosyl)-5'-AMP + diphosphate + H(+). Its pathway is amino-acid biosynthesis; L-histidine biosynthesis; L-histidine from 5-phospho-alpha-D-ribose 1-diphosphate: step 2/9. In Alcanivorax borkumensis (strain ATCC 700651 / DSM 11573 / NCIMB 13689 / SK2), this protein is Phosphoribosyl-ATP pyrophosphatase.